A 165-amino-acid chain; its full sequence is Plastocyanin, chloroplastic (165 aa).

The transit peptide at 1–66 (MATVTSSAAV…AGILAGNAMA (66 aa)) directs the protein to the chloroplast. Residues 67–165 (AEVLLGSSDG…AGMVGKVTVN (99 aa)) enclose the Plastocyanin-like domain. Cu cation is bound by residues His-103, Cys-150, His-153, and Met-158.

It belongs to the plastocyanin family. It depends on Cu(2+) as a cofactor.

Its subcellular location is the plastid. The protein resides in the chloroplast thylakoid membrane. Its function is as follows. Participates in electron transfer between P700 and the cytochrome b6-f complex in photosystem I. The polypeptide is Plastocyanin, chloroplastic (PETE) (Silene latifolia subsp. alba (White campion)).